We begin with the raw amino-acid sequence, 714 residues long: Polyribonucleotide nucleotidyltransferase (714 aa).

Mg(2+) contacts are provided by aspartate 484 and aspartate 490. In terms of domain architecture, KH spans 551 to 610; that stretch reads PRIMVINIAPEKVREVIGPGGKVINKIIDETGVKIDTEDDGKITVAGENTESAQRAIDMI. The region spanning 620-688 is the S1 motif domain; it reads GEKYLGRVTK…DQGKMTLSRK (69 aa). The tract at residues 685–714 is disordered; the sequence is LSRKALLPKPERKEKKNFDKKSEDQNSEDK. Residues 693–714 show a composition bias toward basic and acidic residues; that stretch reads KPERKEKKNFDKKSEDQNSEDK.

It belongs to the polyribonucleotide nucleotidyltransferase family. The cofactor is Mg(2+).

It localises to the cytoplasm. The enzyme catalyses RNA(n+1) + phosphate = RNA(n) + a ribonucleoside 5'-diphosphate. Its function is as follows. Involved in mRNA degradation. Catalyzes the phosphorolysis of single-stranded polyribonucleotides processively in the 3'- to 5'-direction. This is Polyribonucleotide nucleotidyltransferase from Finegoldia magna (strain ATCC 29328 / DSM 20472 / WAL 2508) (Peptostreptococcus magnus).